A 70-amino-acid polypeptide reads, in one-letter code: Large ribosomal subunit protein bL31 (70 aa).

Residues C16, C18, C37, and C40 each contribute to the Zn(2+) site.

This sequence belongs to the bacterial ribosomal protein bL31 family. Type A subfamily. Part of the 50S ribosomal subunit. Zn(2+) is required as a cofactor.

Binds the 23S rRNA. This is Large ribosomal subunit protein bL31 from Haemophilus influenzae (strain PittEE).